A 210-amino-acid polypeptide reads, in one-letter code: Small ribosomal subunit protein uS3 (210 aa).

In terms of domain architecture, KH type-2 spans 38–106 (IRAFLKKRLY…EIFINIIEVR (69 aa)).

This sequence belongs to the universal ribosomal protein uS3 family. As to quaternary structure, part of the 30S ribosomal subunit. Forms a tight complex with proteins S10 and S14.

Its function is as follows. Binds the lower part of the 30S subunit head. Binds mRNA in the 70S ribosome, positioning it for translation. The protein is Small ribosomal subunit protein uS3 of Pelobacter propionicus (strain DSM 2379 / NBRC 103807 / OttBd1).